We begin with the raw amino-acid sequence, 506 residues long: Probable alpha-L-arabinofuranosidase B (506 aa).

Residues 1-26 (MLPQLSIERASVFALGLIATGSLVVA) form the signal peptide. The tract at residues 27-343 (GPCDIYSAGG…ANIVAAKYAT (317 aa)) is catalytic. 3 disulfides stabilise this stretch: Cys-29-Cys-39, Cys-89-Cys-94, and Cys-184-Cys-185. Asp-227 is a binding site for substrate. Glu-229 serves as the catalytic Nucleophile. A substrate-binding site is contributed by Asn-230. N-linked (GlcNAc...) asparagine glycosylation is present at Asn-240. Gly-304 contacts substrate. The Proton donor role is filled by Asp-305. Positions 344-506 (ASLTSGPKLT…VSWVISTGFA (163 aa)) are ABD. An intrachain disulfide couples Cys-409 to Cys-447. 7 residues coordinate substrate: His-424, Asn-426, Phe-427, Asp-443, His-471, Leu-476, and Asp-496.

It belongs to the glycosyl hydrolase 54 family.

The protein resides in the secreted. It carries out the reaction Hydrolysis of terminal non-reducing alpha-L-arabinofuranoside residues in alpha-L-arabinosides.. It functions in the pathway glycan metabolism; L-arabinan degradation. Its function is as follows. Alpha-L-arabinofuranosidase involved in the degradation of arabinoxylan, a major component of plant hemicellulose. Able to hydrolyze 1,5-, 1,3- and 1,2-alpha-linkages not only in L-arabinofuranosyl oligosaccharides, but also in polysaccharides containing terminal non-reducing L-arabinofuranoses in side chains, like L-arabinan, arabinogalactan and arabinoxylan. This chain is Probable alpha-L-arabinofuranosidase B (abfB), found in Aspergillus fumigatus (strain ATCC MYA-4609 / CBS 101355 / FGSC A1100 / Af293) (Neosartorya fumigata).